The chain runs to 413 residues: Large ribosomal subunit protein uL4 (413 aa).

A2 carries the post-translational modification N-acetylalanine. Position 14 is an N6-acetyllysine (K14). The residue at position 97 (R97) is an Omega-N-methylarginine. An N6-acetyllysine modification is found at K106. K239 is covalently cross-linked (Glycyl lysine isopeptide (Lys-Gly) (interchain with G-Cter in SUMO2)). K259 bears the N6-acetyllysine mark. T266 is subject to Phosphothreonine. Phosphoserine occurs at positions 290 and 295. Citrulline is present on R300. Residue K327 forms a Glycyl lysine isopeptide (Lys-Gly) (interchain with G-Cter in SUMO2) linkage. K333 carries the post-translational modification N6-acetyllysine. A disordered region spans residues 355–413; sequence AAALAAKSDPKEAPAKKKPVVGKKKKPVVGRKAAAAKKPAADKKAADKRAGPEDKKPAA. At K361 the chain carries N6-acetyllysine; alternate. Residue K361 forms a Glycyl lysine isopeptide (Lys-Gly) (interchain with G-Cter in SUMO1); alternate linkage. S362 bears the Phosphoserine mark. Over residues 370-383 the composition is skewed to basic residues; that stretch reads KKKPVVGKKKKPVV. The segment covering 393–413 has biased composition (basic and acidic residues); the sequence is PAADKKAADKRAGPEDKKPAA.

The protein belongs to the universal ribosomal protein uL4 family. In terms of assembly, component of the large ribosomal subunit. May bind IPO9 with low affinity. Interacts with RBM3. In terms of processing, citrullinated by PADI4.

It localises to the cytoplasm. Functionally, component of the large ribosomal subunit. The ribosome is a large ribonucleoprotein complex responsible for the synthesis of proteins in the cell. The protein is Large ribosomal subunit protein uL4 (RPL4) of Oryctolagus cuniculus (Rabbit).